Consider the following 152-residue polypeptide: D-aminoacyl-tRNA deacylase (152 aa).

Residues 137-138 carry the Gly-cisPro motif, important for rejection of L-amino acids motif; it reads GP.

The protein belongs to the DTD family. In terms of assembly, homodimer.

The protein localises to the cytoplasm. It catalyses the reaction glycyl-tRNA(Ala) + H2O = tRNA(Ala) + glycine + H(+). The catalysed reaction is a D-aminoacyl-tRNA + H2O = a tRNA + a D-alpha-amino acid + H(+). Its function is as follows. An aminoacyl-tRNA editing enzyme that deacylates mischarged D-aminoacyl-tRNAs. Also deacylates mischarged glycyl-tRNA(Ala), protecting cells against glycine mischarging by AlaRS. Acts via tRNA-based rather than protein-based catalysis; rejects L-amino acids rather than detecting D-amino acids in the active site. By recycling D-aminoacyl-tRNA to D-amino acids and free tRNA molecules, this enzyme counteracts the toxicity associated with the formation of D-aminoacyl-tRNA entities in vivo and helps enforce protein L-homochirality. This is D-aminoacyl-tRNA deacylase from Aromatoleum aromaticum (strain DSM 19018 / LMG 30748 / EbN1) (Azoarcus sp. (strain EbN1)).